Here is a 345-residue protein sequence, read N- to C-terminus: Endochitinase 4 (345 aa).

Positions 1–27 (MAPLLNTGLVILPLIVSTLLGPMPAFA) are cleaved as a signal peptide. N-linked (GlcNAc...) asparagine glycans are attached at residues Asn29 and Asn89. The GH18 domain maps to 41 to 345 (KVLQGYWENW…TFGDNVKGRL (305 aa)). Glu163 (proton donor) is an active-site residue. A glycan (N-linked (GlcNAc...) asparagine) is linked at Asn316.

It belongs to the glycosyl hydrolase 18 family. Chitinase class V subfamily.

Its subcellular location is the secreted. The enzyme catalyses Random endo-hydrolysis of N-acetyl-beta-D-glucosaminide (1-&gt;4)-beta-linkages in chitin and chitodextrins.. Functionally, secreted chitinase involved in the degradation of chitin, a component of the cell walls of fungi and exoskeletal elements of some animals (including worms and arthropods). Participates in the infection process and directly acts in the penetration process of the host cuticle. This Metarhizium robertsii (strain ARSEF 23 / ATCC MYA-3075) (Metarhizium anisopliae (strain ARSEF 23)) protein is Endochitinase 4 (chi4).